The sequence spans 509 residues: Ribonuclease Y (509 aa).

A helical transmembrane segment spans residues 5-25 (IAGVSGIAGAAVGAGACYLWL). A KH domain is found at 199–265 (LINLVNLPSD…TRVIEILIED (67 aa)). Residues 325–418 (ALAHTLEVAK…VCAADTLSAA (94 aa)) enclose the HD domain.

This sequence belongs to the RNase Y family.

Its subcellular location is the cell membrane. Endoribonuclease that initiates mRNA decay. This Sulfurovum sp. (strain NBC37-1) protein is Ribonuclease Y.